The primary structure comprises 523 residues: DNA-(apurinic or apyrimidinic site) endonuclease 2 (523 aa).

E42 is a Mg(2+) binding site. Y151 is an active-site residue. Positions 191, 193, and 294 each coordinate Mg(2+). D191 (proton donor/acceptor) is an active-site residue. Residues 348–392 (MKKNKNNSPTQSENVSASASSGSSPTVSRANSVIDVDAYPPEKRR) form a disordered region. Polar residues predominate over residues 353 to 362 (NNSPTQSENV). Zn(2+) contacts are provided by C458, H461, C484, and C508. A GRF-type zinc finger spans residues 458–517 (CEGHKEPCKYLTVRKPGINYGRKFWICARPVGELIKNSNAVSEEDTQPFQCRFFIWDSDW).

This sequence belongs to the DNA repair enzymes AP/ExoA family. The cofactor is Mg(2+). It depends on Mn(2+) as a cofactor.

It localises to the nucleus. The catalysed reaction is Exonucleolytic cleavage in the 3'- to 5'-direction to yield nucleoside 5'-phosphates.. Functionally, DNA repair enzyme that cleaves apurinic/apyrimidinic (AP) sites and removes 3'-blocking groups present at single strand breaks of damaged DNA. Provides the majority of the AP-endonuclease (APE) activity. Repairs phleomycin D1-induced DNA damage. Plays a role in oxidative damage repair. This Schizosaccharomyces pombe (strain 972 / ATCC 24843) (Fission yeast) protein is DNA-(apurinic or apyrimidinic site) endonuclease 2 (apn2).